The primary structure comprises 161 residues: Cell wall protein YLR042C (161 aa).

Residues 1 to 24 form the signal peptide; the sequence is MKISQFGSLAFAPIVLLQLFIVQA. Residues N77, N104, and N120 are each glycosylated (N-linked (GlcNAc...) asparagine). Residues 111–139 are disordered; sequence FTPLPSSSRNETKSSQTTNTISSSTSTGG. Positions 123–137 are enriched in low complexity; the sequence is KSSQTTNTISSSTST. Residue G139 is the site of GPI-anchor amidated glycine attachment. A propeptide spans 140 to 161 (removed in mature form); that stretch reads VGSVKPCLYFVLMLETIAYLFS.

The GPI-anchor is attached to the protein in the endoplasmic reticulum and serves to target the protein to the cell surface. There, the glucosamine-inositol phospholipid moiety is cleaved off and the GPI-modified mannoprotein is covalently attached via its lipidless GPI glycan remnant to the 1,6-beta-glucan of the outer cell wall layer.

It is found in the secreted. The protein localises to the cell wall. Its subcellular location is the membrane. In Saccharomyces cerevisiae (strain ATCC 204508 / S288c) (Baker's yeast), this protein is Cell wall protein YLR042C.